A 642-amino-acid chain; its full sequence is Ribosome biogenesis protein BOP1 homolog (642 aa).

The tract at residues methionine 1–aspartate 28 is disordered. The span at glutamate 10 to aspartate 20 shows a compositional bias: basic and acidic residues. WD repeat units follow at residues glycine 311–threonine 351, serine 353–arginine 393, arginine 472–lysine 510, threonine 513–lysine 552, histidine 556–lysine 595, and lysine 612–threonine 642.

It belongs to the WD repeat BOP1/ERB1 family.

The protein localises to the nucleus. It localises to the nucleolus. The protein resides in the nucleoplasm. Functionally, required for maturation of ribosomal RNAs and formation of the large ribosomal subunit. This Brugia malayi (Filarial nematode worm) protein is Ribosome biogenesis protein BOP1 homolog.